An 88-amino-acid polypeptide reads, in one-letter code: Large ribosomal subunit protein bL27 (88 aa).

Residues 1–24 (MAHKKGTGSTRNGRDSNSKRLGVK) are disordered.

The protein belongs to the bacterial ribosomal protein bL27 family.

In Synechococcus sp. (strain CC9311), this protein is Large ribosomal subunit protein bL27.